The sequence spans 220 residues: MTQDEMKFTVAQTALKYVIKNTIIGVGTGSTANFFIDALSTIKNNIKGAVASSKATAQRLENHGIRVFDLNKVTAISTYIDGADESDNNLNLIKGGGGALTREKIVAAVAHQFICIADESKLVSIMGSFPLPIEVIPMAANYVKNQISQKIGGIPEVRKDFITDNGNFILDIKDLKITNPKAMETKLNSIIGVVTNGLFANRGANVLLLGTPNGVKIITN.

Substrate-binding positions include 28 to 31 (TGST), 81 to 84 (DGAD), and 94 to 97 (KGGG). Glutamate 103 functions as the Proton acceptor in the catalytic mechanism. Lysine 121 provides a ligand contact to substrate.

It belongs to the ribose 5-phosphate isomerase family. In terms of assembly, homodimer.

It carries out the reaction aldehydo-D-ribose 5-phosphate = D-ribulose 5-phosphate. It participates in carbohydrate degradation; pentose phosphate pathway; D-ribose 5-phosphate from D-ribulose 5-phosphate (non-oxidative stage): step 1/1. Its function is as follows. Catalyzes the reversible conversion of ribose-5-phosphate to ribulose 5-phosphate. The protein is Ribose-5-phosphate isomerase A of Vesicomyosocius okutanii subsp. Calyptogena okutanii (strain HA).